A 537-amino-acid polypeptide reads, in one-letter code: CTP synthase (537 aa).

Positions 1–267 are amidoligase domain; that stretch reads MAKFVFVTGG…ADIVLDKLGI (267 aa). Ser-13 is a CTP binding site. Ser-13 serves as a coordination point for UTP. Residue 14-19 participates in ATP binding; the sequence is SLGKGI. Tyr-54 lines the L-glutamine pocket. Asp-71 lines the ATP pocket. 2 residues coordinate Mg(2+): Asp-71 and Glu-141. CTP is bound by residues 148 to 150, 188 to 193, and Lys-224; these read DIE and KTKPTQ. UTP is bound by residues 188–193 and Lys-224; that span reads KTKPTQ. In terms of domain architecture, Glutamine amidotransferase type-1 spans 292–534; that stretch reads TIALVGKYVS…IGAARKYKES (243 aa). Gly-354 contributes to the L-glutamine binding site. Cys-381 (nucleophile; for glutamine hydrolysis) is an active-site residue. L-glutamine contacts are provided by residues 382–385, Glu-405, and Arg-462; that span reads LGMQ. Active-site residues include His-507 and Glu-509.

It belongs to the CTP synthase family. Homotetramer.

It carries out the reaction UTP + L-glutamine + ATP + H2O = CTP + L-glutamate + ADP + phosphate + 2 H(+). The enzyme catalyses L-glutamine + H2O = L-glutamate + NH4(+). It catalyses the reaction UTP + NH4(+) + ATP = CTP + ADP + phosphate + 2 H(+). It functions in the pathway pyrimidine metabolism; CTP biosynthesis via de novo pathway; CTP from UDP: step 2/2. Allosterically activated by GTP, when glutamine is the substrate; GTP has no effect on the reaction when ammonia is the substrate. The allosteric effector GTP functions by stabilizing the protein conformation that binds the tetrahedral intermediate(s) formed during glutamine hydrolysis. Inhibited by the product CTP, via allosteric rather than competitive inhibition. In terms of biological role, catalyzes the ATP-dependent amination of UTP to CTP with either L-glutamine or ammonia as the source of nitrogen. Regulates intracellular CTP levels through interactions with the four ribonucleotide triphosphates. The sequence is that of CTP synthase from Pelotomaculum thermopropionicum (strain DSM 13744 / JCM 10971 / SI).